Reading from the N-terminus, the 72-residue chain is Translation initiation factor IF-1 (72 aa).

The S1-like domain maps to 1–72 (MAKDDVIEVE…NRGRITYRFK (72 aa)). Y60 carries the phosphotyrosine modification.

Belongs to the IF-1 family. As to quaternary structure, component of the 30S ribosomal translation pre-initiation complex which assembles on the 30S ribosome in the order IF-2 and IF-3, IF-1 and N-formylmethionyl-tRNA(fMet); mRNA recruitment can occur at any time during PIC assembly.

It is found in the cytoplasm. In terms of biological role, one of the essential components for the initiation of protein synthesis. Stabilizes the binding of IF-2 and IF-3 on the 30S subunit to which N-formylmethionyl-tRNA(fMet) subsequently binds. Helps modulate mRNA selection, yielding the 30S pre-initiation complex (PIC). Upon addition of the 50S ribosomal subunit IF-1, IF-2 and IF-3 are released leaving the mature 70S translation initiation complex. The chain is Translation initiation factor IF-1 from Bacillus thuringiensis (strain Al Hakam).